Reading from the N-terminus, the 363-residue chain is NAD-dependent epimerase/dehydratase tndE (363 aa).

A helical membrane pass occupies residues 10-30 (GLVLITGVNGFLASHLALQLI). Position 176 (tyrosine 176) interacts with NADP(+).

The protein belongs to the NAD(P)-dependent epimerase/dehydratase family. Dihydroflavonol-4-reductase subfamily.

The protein localises to the membrane. It functions in the pathway secondary metabolite biosynthesis; terpenoid biosynthesis. Its function is as follows. NAD-dependent epimerase/dehydratase; part of the gene cluster that mediates the biosynthesis of talaronoid C, a fusicoccane diterpenoid with an unprecedented tricyclic 5/8/6 ring system. The first step in the pathway is performed by the fusicoccadiene synthase tndC that possesses both prenyl transferase and terpene cyclase activity, converting isopentenyl diphosphate and dimethylallyl diphosphate into geranylgeranyl diphosphate (GGDP) and further converting GGDP into talarodiene, a precursor for talaronoid C. The remaining enzymes from the cluster include the cytochrome P450 monooxygenase tndB, the aldehyde reductase tndE and the alcohol dehydrogenase tndF that are involved in the conversion of talarodiene into talaronoid C. This Aspergillus flavipes protein is NAD-dependent epimerase/dehydratase tndE.